A 469-amino-acid chain; its full sequence is Probable NADPH:adrenodoxin oxidoreductase, mitochondrial (469 aa).

The transit peptide at 1 to 38 directs the protein to the mitochondrion; sequence MLSRFIKRTYSTQTSSPVVGIIGSGPAAFYTAHRLLRN. The FAD site is built by A27, E48, L56, and V92. NADP(+) is bound by residues 164–167, 208–209, and E220; these read HGNV and RR. FAD-binding positions include W375 and 382-384; that span reads GVI. G382 is an NADP(+) binding site.

The protein belongs to the ferredoxin--NADP reductase type 1 family. It depends on FAD as a cofactor.

The protein resides in the mitochondrion inner membrane. It catalyses the reaction 2 reduced [adrenodoxin] + NADP(+) + H(+) = 2 oxidized [adrenodoxin] + NADPH. In terms of biological role, adrenodoxin reductase transfers electrons from NADPH to adrenodoxin, which is involved in heme A biosynthesis and in iron-sulfur cluster assembly. Involved in the electron transfer to heme A synthase etp1(cd), a heme protein that catalyzes the conversion of heme O to heme A. Required for the de novo synthesis of Fe-S clusters on iron sulfur cluster assembly protein isu1. Involved in electron delivery for Fe-S cluster synthesis. Essential for coenzyme Q biosynthesis. May be involved in the electron transfer required for the hydroxylation reaction performed by coq6. May play a role in cellular and mitochondrial iron homeostasis. This is Probable NADPH:adrenodoxin oxidoreductase, mitochondrial (arh1) from Schizosaccharomyces pombe (strain 972 / ATCC 24843) (Fission yeast).